A 499-amino-acid polypeptide reads, in one-letter code: ATP synthase subunit alpha, chloroplastic (499 aa).

170–177 (GDRQTGKT) lines the ATP pocket.

This sequence belongs to the ATPase alpha/beta chains family. F-type ATPases have 2 components, CF(1) - the catalytic core - and CF(0) - the membrane proton channel. CF(1) has five subunits: alpha(3), beta(3), gamma(1), delta(1), epsilon(1). CF(0) has four main subunits: a, b, b' and c.

It localises to the plastid. It is found in the chloroplast thylakoid membrane. It catalyses the reaction ATP + H2O + 4 H(+)(in) = ADP + phosphate + 5 H(+)(out). Functionally, produces ATP from ADP in the presence of a proton gradient across the membrane. The alpha chain is a regulatory subunit. This Emiliania huxleyi (Coccolithophore) protein is ATP synthase subunit alpha, chloroplastic.